The sequence spans 238 residues: Ribonuclease PH (238 aa).

Phosphate-binding positions include arginine 86 and 124 to 126 (GTR).

Belongs to the RNase PH family. As to quaternary structure, homohexameric ring arranged as a trimer of dimers.

The catalysed reaction is tRNA(n+1) + phosphate = tRNA(n) + a ribonucleoside 5'-diphosphate. In terms of biological role, phosphorolytic 3'-5' exoribonuclease that plays an important role in tRNA 3'-end maturation. Removes nucleotide residues following the 3'-CCA terminus of tRNAs; can also add nucleotides to the ends of RNA molecules by using nucleoside diphosphates as substrates, but this may not be physiologically important. Probably plays a role in initiation of 16S rRNA degradation (leading to ribosome degradation) during starvation. This Chromobacterium violaceum (strain ATCC 12472 / DSM 30191 / JCM 1249 / CCUG 213 / NBRC 12614 / NCIMB 9131 / NCTC 9757 / MK) protein is Ribonuclease PH.